Consider the following 317-residue polypeptide: Transaldolase (317 aa).

Lys132 functions as the Schiff-base intermediate with substrate in the catalytic mechanism.

The protein belongs to the transaldolase family. Type 1 subfamily. Homodimer.

Its subcellular location is the cytoplasm. It carries out the reaction D-sedoheptulose 7-phosphate + D-glyceraldehyde 3-phosphate = D-erythrose 4-phosphate + beta-D-fructose 6-phosphate. The protein operates within carbohydrate degradation; pentose phosphate pathway; D-glyceraldehyde 3-phosphate and beta-D-fructose 6-phosphate from D-ribose 5-phosphate and D-xylulose 5-phosphate (non-oxidative stage): step 2/3. Functionally, transaldolase is important for the balance of metabolites in the pentose-phosphate pathway. In Shewanella denitrificans (strain OS217 / ATCC BAA-1090 / DSM 15013), this protein is Transaldolase.